Consider the following 107-residue polypeptide: Vasopressin-neurophysin 2 (107 aa).

A disulfide bridge links C1 with C6. G9 is modified (glycine amide). Cystine bridges form between C22–C66, C25–C39, C33–C56, C40–C46, C73–C85, C79–C97, and C86–C91.

The protein belongs to the vasopressin/oxytocin family. As to quaternary structure, interacts with vasopressin receptors V1bR/AVPR1B (Ki=85 pM), V1aR/AVPR1A (Ki=0.6 nM) and V2R/AVPR2 (Ki=4.9 nM). Interacts with oxytocin receptor (OXTR) (Ki=110 nM).

Its subcellular location is the secreted. Functionally, neurophysin 2 specifically binds vasopressin. In terms of biological role, vasopressin has a direct antidiuretic action on the kidney, it also causes vasoconstriction of the peripheral vessels. Acts by binding to vasopressin receptors (V1bR/AVPR1B, V1aR/AVPR1A, and V2R/AVPR2). The protein is Vasopressin-neurophysin 2 (AVP) of Balaenoptera physalus (Fin whale).